The chain runs to 444 residues: ATP-dependent protease ATPase subunit HslU (444 aa).

Residues Ile20 and 62-67 (GVGKTE) contribute to the ATP site. A disordered region spans residues 130–158 (EDRILDALVPPPRGASGEPERGEDNSARQ). Residues Asp257, Glu322, and Arg394 each contribute to the ATP site.

It belongs to the ClpX chaperone family. HslU subfamily. A double ring-shaped homohexamer of HslV is capped on each side by a ring-shaped HslU homohexamer. The assembly of the HslU/HslV complex is dependent on binding of ATP.

It localises to the cytoplasm. In terms of biological role, ATPase subunit of a proteasome-like degradation complex; this subunit has chaperone activity. The binding of ATP and its subsequent hydrolysis by HslU are essential for unfolding of protein substrates subsequently hydrolyzed by HslV. HslU recognizes the N-terminal part of its protein substrates and unfolds these before they are guided to HslV for hydrolysis. This is ATP-dependent protease ATPase subunit HslU from Bordetella pertussis (strain Tohama I / ATCC BAA-589 / NCTC 13251).